A 93-amino-acid chain; its full sequence is Secretoglobin family 3A member 2 (93 aa).

Positions 1–21 are cleaved as a signal peptide; it reads MKLVTIFLLVTISLCSYSATA.

This sequence belongs to the secretoglobin family. UGRP subfamily. As to quaternary structure, homodimer; disulfide-linked. Monomer. Interacts with APOA1. As to expression, highly expressed in lung and trachea. Detected throughout the airway epithelium in lung, with slightly higher expression in large airways. Found in lung submucosal gland acinus where it localizes to serous-like cells. Probably expressed in club cells of the bronchioles. Not detected in other tissues tested.

The protein resides in the secreted. Its function is as follows. Secreted cytokine-like protein. Binds to the scavenger receptor MARCO. Can also bind to pathogens including the Gram-positive bacterium L.monocytogenes, the Gram-negative bacterium P.aeruginosa, and yeast. Strongly inhibits phospholipase A2 (PLA2G1B) activity. Seems to have anti-inflammatory effects in respiratory epithelium. Also has anti-fibrotic activity in lung. May play a role in fetal lung development and maturation. Promotes branching morphogenesis during early stages of lung development. In the pituitary, may inhibit production of follicle-stimulating hormone (FSH) and luteinizing hormone (LH). In Homo sapiens (Human), this protein is Secretoglobin family 3A member 2 (SCGB3A2).